Consider the following 430-residue polypeptide: Nitroalkane oxidase (430 aa).

Residues 132 to 135 (LVFS), 140 to 142 (VAN), 170 to 172 (WAT), Arg-301, Gln-311, 372 to 376 (NAVGI), and 397 to 401 (IFDGG) contribute to the FAD site. Asp-399 acts as the Proton acceptor in catalysis.

Belongs to the acyl-CoA dehydrogenase family. As to quaternary structure, homotetramer. Requires FAD as cofactor.

The enzyme catalyses a primary nitroalkane + O2 + H2O = an aldehyde + nitrite + H2O2 + H(+). It catalyses the reaction a secondary nitroalkane + O2 + H2O = a ketone + nitrite + H2O2 + H(+). Nitroalkane oxidase (NAO) catalyzes the oxidation of nitroalkanes to the corresponding aldehydes or ketones with the release of nitrite and the consumption of molecular oxygen to yield hydrogen peroxide. NAO is unusual, since it catalyzes substrate oxidation by removing a substrate proton to form a carbanion intermediate. Prefers longer nitroalkanes, with 1-nitrohexane having the highest activity. The sequence is that of Nitroalkane oxidase from Podospora anserina (strain S / ATCC MYA-4624 / DSM 980 / FGSC 10383) (Pleurage anserina).